The primary structure comprises 793 residues: Netrin-B (793 aa).

The first 22 residues, 1-22 (MVRATGTRMGLLLPIILALAIG), serve as a signal peptide directing secretion. The Laminin N-terminal domain occupies 39–303 (KPRKCLPSFV…NLQDNDSADA (265 aa)). 3 N-linked (GlcNAc...) asparagine glycosylation sites follow: Asn103, Asn125, and Asn298. The disordered stretch occupies residues 332-378 (SVVKRQGKHKGSAYEKHYQSKLAATTPPQQPPKVTPPGKVTPPSTAA). Over residues 367–378 (PPGKVTPPSTAA) the composition is skewed to low complexity. Intrachain disulfides connect Cys405-Cys414, Cys407-Cys461, Cys463-Cys472, Cys475-Cys495, Cys498-Cys507, Cys500-Cys525, Cys528-Cys537, Cys540-Cys558, Cys561-Cys573, Cys563-Cys580, Cys582-Cys591, Cys594-Cys608, Cys649-Cys738, Cys652-Cys740, and Cys665-Cys792. Laminin EGF-like domains are found at residues 405-497 (CKCN…ECKM), 498-560 (CQCN…VCKR), and 561-610 (CDCH…PCIK). The segment at 420–446 (SGSGTALSDQDDGQDEDTPSAPSLANH) is disordered. Residues 428–437 (DQDDGQDEDT) are compositionally biased toward acidic residues. An NTR domain is found at 649 to 792 (CGKCKASPKK…KRFQRRARKC (144 aa)). A glycan (N-linked (GlcNAc...) asparagine) is linked at Asn746.

As to quaternary structure, binds to unc-5 and fra receptors. As to expression, at 24 hr after puparium formation (APF), detected in the most anterior (oldest) L3, L4 and L5 lamina neurons (at protein level). At 48 hr APF, expressed in all L3, L4 and L5 neurons with slightly higher expression in the L3 neurons (at protein level). At the midline of developing CNS and in different subsets of neurons, muscles, and epidermal patches.

It is found in the secreted. Its subcellular location is the extracellular space. The protein localises to the extracellular matrix. It localises to the cytoplasm. The protein resides in the perinuclear region. Functionally, netrins control guidance of CNS commissural axons and peripheral motor axons. Its association with either fra or unc-5 receptors will lead to axon attraction or repulsion, respectively. While short-range repulsion requires both fra and unc-5 receptors, long-range repulsion only requires unc-5. The protein is Netrin-B (NetB) of Drosophila melanogaster (Fruit fly).